Consider the following 452-residue polypeptide: Bifunctional protein GlmU (452 aa).

Residues 1–225 are pyrophosphorylase; sequence MDVVILAAGL…ENELIGINTR (225 aa). UDP-N-acetyl-alpha-D-glucosamine-binding positions include 6–9, lysine 20, glutamine 71, and 76–77; these read LAAG and GT. Residue aspartate 99 participates in Mg(2+) binding. Glycine 136, glutamate 151, asparagine 166, and asparagine 223 together coordinate UDP-N-acetyl-alpha-D-glucosamine. Position 223 (asparagine 223) interacts with Mg(2+). A linker region spans residues 226-246; the sequence is AELSLAMRYLRDRIVKGWMEK. The segment at 247–452 is N-acetyltransferase; sequence GITFYDPALV…LGWAKKKRKQ (206 aa). UDP-N-acetyl-alpha-D-glucosamine-binding residues include arginine 329 and lysine 347. Histidine 359 serves as the catalytic Proton acceptor. Positions 362 and 373 each coordinate UDP-N-acetyl-alpha-D-glucosamine. Acetyl-CoA is bound by residues alanine 376, 382 to 383, serine 401, alanine 419, and arginine 436; that span reads NY.

It in the N-terminal section; belongs to the N-acetylglucosamine-1-phosphate uridyltransferase family. This sequence in the C-terminal section; belongs to the transferase hexapeptide repeat family. Homotrimer. Mg(2+) is required as a cofactor.

Its subcellular location is the cytoplasm. It catalyses the reaction alpha-D-glucosamine 1-phosphate + acetyl-CoA = N-acetyl-alpha-D-glucosamine 1-phosphate + CoA + H(+). The enzyme catalyses N-acetyl-alpha-D-glucosamine 1-phosphate + UTP + H(+) = UDP-N-acetyl-alpha-D-glucosamine + diphosphate. The protein operates within nucleotide-sugar biosynthesis; UDP-N-acetyl-alpha-D-glucosamine biosynthesis; N-acetyl-alpha-D-glucosamine 1-phosphate from alpha-D-glucosamine 6-phosphate (route II): step 2/2. It participates in nucleotide-sugar biosynthesis; UDP-N-acetyl-alpha-D-glucosamine biosynthesis; UDP-N-acetyl-alpha-D-glucosamine from N-acetyl-alpha-D-glucosamine 1-phosphate: step 1/1. It functions in the pathway bacterial outer membrane biogenesis; LPS lipid A biosynthesis. Its function is as follows. Catalyzes the last two sequential reactions in the de novo biosynthetic pathway for UDP-N-acetylglucosamine (UDP-GlcNAc). The C-terminal domain catalyzes the transfer of acetyl group from acetyl coenzyme A to glucosamine-1-phosphate (GlcN-1-P) to produce N-acetylglucosamine-1-phosphate (GlcNAc-1-P), which is converted into UDP-GlcNAc by the transfer of uridine 5-monophosphate (from uridine 5-triphosphate), a reaction catalyzed by the N-terminal domain. The sequence is that of Bifunctional protein GlmU from Thermodesulfovibrio yellowstonii (strain ATCC 51303 / DSM 11347 / YP87).